The chain runs to 349 residues: Sensory histidine kinase/phosphatase NtrB (349 aa).

Residues 5-78 form the PAS domain; it reads IQPDAGQILN…SLAAGQGFTD (74 aa). A Histidine kinase domain is found at 136–349; that stretch reads GLAHEIKNPL…EFSVYLPIRK (214 aa). Position 139 is a phosphohistidine; by autocatalysis (histidine 139). Residue lysine 329 coordinates ATP.

Post-translationally, autophosphorylated.

It is found in the cytoplasm. It carries out the reaction ATP + protein L-histidine = ADP + protein N-phospho-L-histidine.. In terms of biological role, member of the two-component regulatory system NtrB/NtrC, which controls expression of the nitrogen-regulated (ntr) genes in response to nitrogen limitation. Under conditions of nitrogen limitation, NtrB autophosphorylates and transfers the phosphoryl group to NtrC. In the presence of nitrogen, acts as a phosphatase that dephosphorylates and inactivates NtrC. The chain is Sensory histidine kinase/phosphatase NtrB (glnL) from Salmonella typhi.